A 165-amino-acid chain; its full sequence is Myosin regulatory light chain 2, ventricular/cardiac muscle isoform (165 aa).

N,N,N-trimethylserine is present on serine 2. Position 14 is a deamidated asparagine (asparagine 14). Serine 15 and serine 19 each carry phosphoserine. 3 EF-hand domains span residues 24-59, 94-129, and 130-165; these read TQIQEFKEAFTIMDQNRDGFIDKNDLRDTFAALGRV, DPEETILNAFKVFDPEGKGVLKADYVREMLTTQAER, and FSKDEIDQMFAAFPPDVTGNLDYKNLVHIITHGEEK. Ca(2+)-binding residues include aspartate 37, asparagine 39, aspartate 41, and aspartate 48. Residue threonine 52 is modified to Phosphothreonine.

As to quaternary structure, myosin is a hexamer of 2 heavy chains and 4 light chains. Interacts with MYOC. Post-translationally, N-terminus is methylated by METTL11A/NTM1. In terms of processing, phosphorylated by MYLK3 and MYLK2; promotes cardiac muscle contraction and function. Dephosphorylated by PPP1CB complexed to PPP1R12B. The phosphorylated form in adult is expressed as gradients across the heart from endocardium (low phosphorylation) to epicardium (high phosphorylation); regulates cardiac torsion and workload distribution.

The protein localises to the cytoplasm. It localises to the myofibril. Its subcellular location is the sarcomere. The protein resides in the a band. Contractile protein that plays a role in heart development and function. Following phosphorylation, plays a role in cross-bridge cycling kinetics and cardiac muscle contraction by increasing myosin lever arm stiffness and promoting myosin head diffusion; as a consequence of the increase in maximum contraction force and calcium sensitivity of contraction force. These events altogether slow down myosin kinetics and prolong duty cycle resulting in accumulated myosins being cooperatively recruited to actin binding sites to sustain thin filament activation as a means to fine-tune myofilament calcium sensitivity to force. During cardiogenesis plays an early role in cardiac contractility by promoting cardiac myofibril assembly. The protein is Myosin regulatory light chain 2, ventricular/cardiac muscle isoform of Oryctolagus cuniculus (Rabbit).